Here is a 330-residue protein sequence, read N- to C-terminus: Ferredoxin--NADP reductase (330 aa).

Positions 35, 43, 48, 90, 123, 285, and 326 each coordinate FAD.

The protein belongs to the ferredoxin--NADP reductase type 2 family. As to quaternary structure, homodimer. The cofactor is FAD.

It carries out the reaction 2 reduced [2Fe-2S]-[ferredoxin] + NADP(+) + H(+) = 2 oxidized [2Fe-2S]-[ferredoxin] + NADPH. The polypeptide is Ferredoxin--NADP reductase (Streptococcus pyogenes serotype M2 (strain MGAS10270)).